Consider the following 145-residue polypeptide: Large ribosomal subunit protein uL13 (145 aa).

The disordered stretch occupies residues 72 to 91 (DKMYHRHSNHPGGLKSISAG).

It belongs to the universal ribosomal protein uL13 family. As to quaternary structure, part of the 50S ribosomal subunit.

This protein is one of the early assembly proteins of the 50S ribosomal subunit, although it is not seen to bind rRNA by itself. It is important during the early stages of 50S assembly. In Staphylococcus epidermidis (strain ATCC 12228 / FDA PCI 1200), this protein is Large ribosomal subunit protein uL13.